The primary structure comprises 770 residues: Coiled-coil alpha-helical rod protein 1 (770 aa).

3 coiled-coil regions span residues 56–289 (STVT…DLQA), 334–420 (LRNW…RQEQ), and 476–669 (GLMA…RKEE). Disordered regions lie at residues 573-592 (LEAA…SLRQ), 641-672 (LRQI…EGQR), 700-721 (NKKC…AASC), and 744-770 (SRDE…PLLS). Residues 648–672 (ATQEKERNQELRRLQDEARKEEGQR) are compositionally biased toward basic and acidic residues. Residues 701 to 721 (KKCSPRSVESSSSESPAAASC) are compositionally biased toward low complexity.

Its subcellular location is the cytoplasm. The protein resides in the nucleus. Its function is as follows. May be a regulator of keratinocyte proliferation or differentiation. The sequence is that of Coiled-coil alpha-helical rod protein 1 (Cchcr1) from Mus musculus (Mouse).